A 538-amino-acid chain; its full sequence is Chaperonin GroEL 1 (538 aa).

ATP-binding positions include 30 to 33 (TLGP), Lys51, 87 to 91 (DGTTT), Gly415, 479 to 481 (NAA), and Asp495.

It belongs to the chaperonin (HSP60) family. Forms a cylinder of 14 subunits composed of two heptameric rings stacked back-to-back. Interacts with the co-chaperonin GroES.

It is found in the cytoplasm. It catalyses the reaction ATP + H2O + a folded polypeptide = ADP + phosphate + an unfolded polypeptide.. Its function is as follows. Together with its co-chaperonin GroES, plays an essential role in assisting protein folding. The GroEL-GroES system forms a nano-cage that allows encapsulation of the non-native substrate proteins and provides a physical environment optimized to promote and accelerate protein folding. The protein is Chaperonin GroEL 1 of Chromobacterium violaceum (strain ATCC 12472 / DSM 30191 / JCM 1249 / CCUG 213 / NBRC 12614 / NCIMB 9131 / NCTC 9757 / MK).